The following is an 83-amino-acid chain: Large ribosomal subunit protein bL31B (83 aa).

This sequence belongs to the bacterial ribosomal protein bL31 family. Type B subfamily. In terms of assembly, part of the 50S ribosomal subunit.

This chain is Large ribosomal subunit protein bL31B, found in Lactobacillus gasseri (strain ATCC 33323 / DSM 20243 / BCRC 14619 / CIP 102991 / JCM 1131 / KCTC 3163 / NCIMB 11718 / NCTC 13722 / AM63).